The following is a 143-amino-acid chain: Hemoglobin subunit alpha-1 (143 aa).

Ser2 is subject to N-acetylserine. The Globin domain occupies 2–143; sequence SLTEKDKAAV…VSLALAERYR (142 aa). Position 60 (His60) interacts with O2. His89 contributes to the heme b binding site.

It belongs to the globin family. Hb 1 is a heterotetramer of two alpha-1 and two beta chains. Red blood cells.

Functionally, involved in oxygen transport from gills to the various peripheral tissues. The chain is Hemoglobin subunit alpha-1 (hba1) from Cottoperca gobio (Frogmouth).